We begin with the raw amino-acid sequence, 266 residues long: Small ribosomal subunit protein uS2 (266 aa).

A disordered region spans residues 238 to 266 (EFASAPDAGKKGRQAQPKKGKRASDAAAE). Over residues 248–258 (KGRQAQPKKGK) the composition is skewed to basic residues.

It belongs to the universal ribosomal protein uS2 family.

The sequence is that of Small ribosomal subunit protein uS2 from Xylella fastidiosa (strain M12).